The primary structure comprises 53 residues: uncharacterized protein (53 aa).

Positions 14-33 are enriched in low complexity; the sequence is SPSSLNNNNNINSKSLQINS. The interval 14–53 is disordered; the sequence is SPSSLNNNNNINSKSLQINSENKSKIQNNNPLGNKGGVQF.

This is an uncharacterized protein from Dictyostelium discoideum (Social amoeba).